The following is a 445-amino-acid chain: Histamine H3 receptor (445 aa).

At 1-40 (MERAPPDGLMNASGALAGEAAAAAGGARTFSAAWTAVLAA) the chain is on the extracellular side. Residue Asn-11 is glycosylated (N-linked (GlcNAc...) asparagine). A helical transmembrane segment spans residues 41–61 (LMALLIVATVLGNALVMLAFV). At 62–71 (ADSSLRTQNN) the chain is on the cytoplasmic side. A helical membrane pass occupies residues 72 to 92 (FFLLNLAISDFLVGVFCIPLY). Residues 93–109 (VPYVLTGRWTFGRGLCK) are Extracellular-facing. Cys-108 and Cys-189 form a disulfide bridge. Residues 110–130 (LWLVVDYLLCTSSVFNIVLIS) form a helical membrane-spanning segment. The Cytoplasmic portion of the chain corresponds to 131-157 (YDRFLSVTRAVSYRAQQGDTRRAVRKM). Residues 158-178 (VLVWVLAFLLYGPAILSWEYL) traverse the membrane as a helical segment. Over 179-197 (SGGSSIPEGHCYAEFFYNW) the chain is Extracellular. Residues 198-218 (YFLITASTLEFFTPFLSVTFF) form a helical membrane-spanning segment. Over 219–359 (NLSIYLNIQR…LSRDKKVAKS (141 aa)) the chain is Cytoplasmic. 2 disordered regions span residues 236–264 (GGAREAGPDPLPEAQSSPPQPPPGCWGCW) and 288–336 (AGEA…LEKR). Low complexity predominate over residues 299 to 312 (AAASPTSSSGSSSR). Residues 360 to 380 (LAIIVSIFGLCWAPYTLLMII) form a helical membrane-spanning segment. Residues 381-398 (RAACHGHCVPDYWYETSF) are Extracellular-facing. A helical membrane pass occupies residues 399 to 419 (WLLWANSAVNPVLYPLCHYSF). Residues 420-445 (RRAFTKLLCPQKLKVQPHSSLEHCWK) are Cytoplasmic-facing. Ser-439 carries the phosphoserine modification.

It belongs to the G-protein coupled receptor 1 family. As to expression, expressed widely and abundantly throughout the brain. Highly expressed in discrete neuronal populations such as pyramidal cells in cerebral cortex or cerebellar Purkinje cells.

Its subcellular location is the cell membrane. The H3 subclass of histamine receptors could mediate the histamine signals in CNS and peripheral nervous system. Signals through the inhibition of adenylate cyclase and displays high constitutive activity (spontaneous activity in the absence of agonist). The chain is Histamine H3 receptor (HRH3) from Cavia porcellus (Guinea pig).